The sequence spans 392 residues: MADPLALARALVACPSVTPRDAGALDVLESALIALGFRCVRLPFGAEGGERVDNLYARRGGAGPCFGFAGHTDVVPAGDGWSRPPFGAEVVDGALVGRGAADMKGGIACFVAAVARLISGPDSTGSISRHDPTGSIALLITGDEEGPALHGTRKVLEWMEGAGERMDLCLVGEPTNPEGLGDMIKIGRRGSLTATVTLLGRAGHVAYPHLADNPLHRLSTLTGLLLAETLDDGTAHFQPSSLQLTSIDVGNPAANVIPAKATLRFNIRFNDRHSGESLSAWIRARCLAACDGDESGFSLVLEHSGDAFLTPPGPLSDLIATACQAVTGRRPELSTSGGTSDARFIRSHCPVAEFGLVGRTMHKPDERVAVADLEALSEIYRRVLVGFFEAPC.

Residue H71 coordinates Zn(2+). Residue D73 is part of the active site. Residue D102 participates in Zn(2+) binding. E144 acts as the Proton acceptor in catalysis. Zn(2+) contacts are provided by E145, E173, and H362.

Belongs to the peptidase M20A family. DapE subfamily. Homodimer. Requires Zn(2+) as cofactor. The cofactor is Co(2+).

The catalysed reaction is N-succinyl-(2S,6S)-2,6-diaminopimelate + H2O = (2S,6S)-2,6-diaminopimelate + succinate. Its pathway is amino-acid biosynthesis; L-lysine biosynthesis via DAP pathway; LL-2,6-diaminopimelate from (S)-tetrahydrodipicolinate (succinylase route): step 3/3. Functionally, catalyzes the hydrolysis of N-succinyl-L,L-diaminopimelic acid (SDAP), forming succinate and LL-2,6-diaminopimelate (DAP), an intermediate involved in the bacterial biosynthesis of lysine and meso-diaminopimelic acid, an essential component of bacterial cell walls. This chain is Succinyl-diaminopimelate desuccinylase, found in Rhodospirillum rubrum (strain ATCC 11170 / ATH 1.1.1 / DSM 467 / LMG 4362 / NCIMB 8255 / S1).